The primary structure comprises 397 residues: 2-aminoadipate transaminase (397 aa).

Residue G40 coordinates substrate. Pyridoxal 5'-phosphate is bound by residues Y70, 100–101, N174, 202–205, 235–237, and R245; these read SQ, DDAY, and SFS. N174 contacts substrate. K263 carries the N6-(pyridoxal phosphate)lysine modification. Residue R368 coordinates substrate.

This sequence belongs to the class-I pyridoxal-phosphate-dependent aminotransferase family. Homodimer. Pyridoxal 5'-phosphate is required as a cofactor.

The catalysed reaction is L-2-aminoadipate + 2-oxoglutarate = 2-oxoadipate + L-glutamate. It functions in the pathway amino-acid biosynthesis; L-lysine biosynthesis via AAA pathway; L-alpha-aminoadipate from 2-oxoglutarate: step 5/5. In terms of biological role, catalyzes the transfer of an amino group between 2-oxoadipate (2-OA) and glutamate (Glu) to yield alpha-aminodipate (AAA). It can also transaminate glutamate, leucine, and aromatic amino acids. It also contributes in the biosynthesis of other amino acids such as leucine. The chain is 2-aminoadipate transaminase (lysN) from Thermus thermophilus (strain ATCC BAA-163 / DSM 7039 / HB27).